We begin with the raw amino-acid sequence, 249 residues long: Probable transcriptional regulatory protein Csal_1845 (249 aa).

The protein belongs to the TACO1 family.

It is found in the cytoplasm. The sequence is that of Probable transcriptional regulatory protein Csal_1845 from Chromohalobacter salexigens (strain ATCC BAA-138 / DSM 3043 / CIP 106854 / NCIMB 13768 / 1H11).